Reading from the N-terminus, the 175-residue chain is COMPASS component SDC1 (175 aa).

A compositionally biased stretch (polar residues) spans 1–12 (MNESENSPQHNE). Residues 1-45 (MNESENSPQHNEVTVPMVEDTSSNADIPMEQIQREDNKNYDKHDN) are disordered. Residues 32–45 (IQREDNKNYDKHDN) show a composition bias toward basic and acidic residues. Residues 121–162 (QTRKYLNTNVTPHLLAGMRLIAVQQPEDPLRVLGEYLIEQSN) form a DPY-30 region.

This sequence belongs to the dpy-30 family. Component of the Set1C/COMPASS complex which consists of SET1(2), BRE2(2), SPP1(2), SDC1(1), SHG1(1), SWD1(1), SWD2(1), and SWD3(1). Interacts directly with BRE2.

It is found in the nucleus. Its function is as follows. Component of the Set1C/COMPASS complex that specifically mono-, di- and trimethylates histone H3 to form H3K4me1/2/3, which subsequently plays a role in telomere length maintenance and transcription elongation regulation. COMPASS recognizes ubiquitinated H2B on one face of the nucleosome which stimulates the methylation of H3 on the opposing face. The polypeptide is COMPASS component SDC1 (Saccharomyces cerevisiae (strain ATCC 204508 / S288c) (Baker's yeast)).